The sequence spans 339 residues: GTP 3',8-cyclase (339 aa).

The 222-residue stretch at asparagine 20–aspartate 241 folds into the Radical SAM core domain. GTP is bound at residue arginine 29. The [4Fe-4S] cluster site is built by cysteine 36 and cysteine 40. Tyrosine 42 contacts S-adenosyl-L-methionine. Cysteine 43 contributes to the [4Fe-4S] cluster binding site. Residue arginine 78 coordinates GTP. Glycine 82 contacts S-adenosyl-L-methionine. Threonine 109 is a binding site for GTP. Position 133 (serine 133) interacts with S-adenosyl-L-methionine. A GTP-binding site is contributed by lysine 170. Residue methionine 204 coordinates S-adenosyl-L-methionine. [4Fe-4S] cluster contacts are provided by cysteine 267 and cysteine 270. Arginine 272–arginine 274 is a binding site for GTP. [4Fe-4S] cluster is bound at residue cysteine 284.

The protein belongs to the radical SAM superfamily. MoaA family. As to quaternary structure, monomer and homodimer. The cofactor is [4Fe-4S] cluster.

The catalysed reaction is GTP + AH2 + S-adenosyl-L-methionine = (8S)-3',8-cyclo-7,8-dihydroguanosine 5'-triphosphate + 5'-deoxyadenosine + L-methionine + A + H(+). It functions in the pathway cofactor biosynthesis; molybdopterin biosynthesis. Functionally, catalyzes the cyclization of GTP to (8S)-3',8-cyclo-7,8-dihydroguanosine 5'-triphosphate. The chain is GTP 3',8-cyclase from Psychromonas ingrahamii (strain DSM 17664 / CCUG 51855 / 37).